Reading from the N-terminus, the 512-residue chain is NAD(P) transhydrogenase subunit alpha (512 aa).

The Cytoplasmic portion of the chain corresponds to 1 to 400 (MLIGVPRELL…KESKPTDPRV (400 aa)). Residues 125–128 (QALD), valine 175, 195–197 (DSR), and glycine 225 each bind NAD(+). The interval 375 to 394 (SAQPKQETKAAPVAEKKESK) is disordered. Helical transmembrane passes span 401–421 (KYGV…VAPA) and 422–442 (AFLS…YVVW). Residues 443–451 (NVSHALHTP) lie on the Cytoplasmic side of the membrane. Residues 452-472 (LMAVTNAISGIIIVGALLQIR) form a helical membrane-spanning segment. At 473–478 (QPTGNL) the chain is on the periplasmic side. A helical membrane pass occupies residues 479–499 (FIDALAFVAILVASINIFGGF). Over 500-512 (RVTQRMLAMFRKG) the chain is Cytoplasmic.

It belongs to the AlaDH/PNT family. In terms of assembly, heterodimer of an alpha (PntA) and a beta (PntB) chain.

The protein localises to the cell inner membrane. It catalyses the reaction NAD(+) + NADPH + H(+)(in) = NADH + NADP(+) + H(+)(out). In terms of biological role, the transhydrogenation between NADH and NADP is coupled to respiration and ATP hydrolysis and functions as a proton pump across the membrane. The sequence is that of NAD(P) transhydrogenase subunit alpha (pntA) from Haemophilus influenzae (strain ATCC 51907 / DSM 11121 / KW20 / Rd).